We begin with the raw amino-acid sequence, 169 residues long: Signal peptidase complex subunit 1 (169 aa).

Over 1–93 (MARGGDTGCT…QKLAEQMFQG (93 aa)) the chain is Cytoplasmic. A (Microbial infection) Interaction with JEV NS2B region spans residues 91–169 (FQGIILFSAI…RKIKRHAKNN (79 aa)). Residues 94-114 (IILFSAIVGFIYGYVAEQFGW) traverse the membrane as a helical segment. Positions 110-169 (EQFGWTVYIVMAGFAFSCLLTLPPWPIYRRHPLKWLPVQESSTDDKKPGERKIKRHAKNN) are (Microbial infection) Interaction with HCV NS2 and HCV E2. Position 115 (Thr-115) is a topological domain, lumenal. A helical membrane pass occupies residues 116–136 (VYIVMAGFAFSCLLTLPPWPI). The Cytoplasmic portion of the chain corresponds to 137–169 (YRRHPLKWLPVQESSTDDKKPGERKIKRHAKNN). Residues 148-169 (QESSTDDKKPGERKIKRHAKNN) form a disordered region.

Belongs to the SPCS1 family. In terms of assembly, component of the signal peptidase complex paralog A (SPC-A) composed of a catalytic subunit SEC11A and three accessory subunits SPCS1, SPCS2 and SPCS3. Component of the signal peptidase complex paralog C (SPC-C) composed of a catalytic subunit SEC11C and three accessory subunits SPCS1, SPCS2 and SPCS3. Within the complex, interacts with SPCS2 and SPCS3. The complex induces a local thinning of the ER membrane which is used to measure the length of the signal peptide (SP) h-region of protein substrates. This ensures the selectivity of the complex towards h-regions shorter than 18-20 amino acids. As to quaternary structure, (Microbial infection) Interacts with hepatitis C virus (HCV) proteins NS2 and E2. Interacts with NS2B from Japanese encephalitis virus (JEV), West Nile virus (WNV), and Zika virus (ZIKV). May be phosphorylated.

Its subcellular location is the endoplasmic reticulum membrane. Component of the signal peptidase complex (SPC) which catalyzes the cleavage of N-terminal signal sequences from nascent proteins as they are translocated into the lumen of the endoplasmic reticulum. Dispensable for SPC enzymatic activity. Its function is as follows. (Microbial infection) Required for the post-translational processing of proteins involved in virion assembly and secretion from flaviviruses such as West Nile virus (WNV), Japanese encephalitis virus (JEV), Dengue virus type 2 (DENV-2), Yellow Fever virus (YFV), Zika virus (ZIKV) and hepatitis C virus (HCV). Plays a key role in the post-translational processing of flaviviral structural proteins prM, E, and NS1. In HCV, it is involved in virion assembly where it promotes the interaction between HCV virus proteins NS2 and E2. This chain is Signal peptidase complex subunit 1 (SPCS1), found in Homo sapiens (Human).